We begin with the raw amino-acid sequence, 100 residues long: uncharacterized protein (100 aa).

This is an uncharacterized protein from Bacillus subtilis (strain 168).